A 1873-amino-acid polypeptide reads, in one-letter code: SAGA complex subunit Spt20 (1873 aa).

Belongs to the SPT20 family. Component of the Spt-Ada-Gcn5 acetyltransferase (SAGA) complex consisting of wda/Taf5L, Saf6, Taf9, Taf10b, Taf12, Ada1, Spt3, Spt7, Spt20, Sf3b3, Sf3b5, Nipped-A/Tra1, a histone acetyltransferase (HAT) module made up of Gcn5, Ada2b (Isoform B), Ada3 and Sgf29, and a deubiquitinase (DUB) module made up of not/nonstop, Sgf11 and e(y)2 tethered to SAGA by Atxn7.

It is found in the nucleus. In terms of biological role, component of the transcription regulatory complex SAGA, a multiprotein complex that activates transcription by remodeling chromatin and mediating histone acetylation and deubiquitination. The SAGA complex predominantly acetylates histone H3. The chain is SAGA complex subunit Spt20 from Drosophila melanogaster (Fruit fly).